Reading from the N-terminus, the 127-residue chain is Probable glycine cleavage system H protein (127 aa).

Residues 24-106 (TAEVGITAFA…FGDGWMLTVE (83 aa)) form the Lipoyl-binding domain. Lysine 65 carries the N6-lipoyllysine modification.

It belongs to the GcvH family. As to quaternary structure, the glycine cleavage system is composed of four proteins: P, T, L and H. (R)-lipoate serves as cofactor.

Functionally, the glycine cleavage system catalyzes the degradation of glycine. The H protein shuttles the methylamine group of glycine from the P protein to the T protein. The protein is Probable glycine cleavage system H protein of Haloarcula marismortui (strain ATCC 43049 / DSM 3752 / JCM 8966 / VKM B-1809) (Halobacterium marismortui).